Reading from the N-terminus, the 538-residue chain is Protein PNS1 (538 aa).

Positions 1–54 are enriched in low complexity; sequence MGESDAYYNGGQQQQYNGGYQQQYQPQPPAASYQAPPQQPYQQQPYQQGPPQNG. The disordered stretch occupies residues 1 to 67; the sequence is MGESDAYYNG…GNGYMPAQGY (67 aa). At 1–88 the chain is on the cytoplasmic side; that stretch reads MGESDAYYNG…FKIAKPKYND (88 aa). The helical transmembrane segment at 89–109 threads the bilayer; the sequence is LWAGILLILVFAGFVVVSGLA. Over 110 to 137 the chain is Extracellular; that stretch reads LQGYSANKGNAGDGIYNNKNDFSPNTST. N-linked (GlcNAc...) asparagine glycosylation occurs at asparagine 134. Residues 138-158 form a helical membrane-spanning segment; it reads VILFMFVLAVAFVLSYAYVWM. The Cytoplasmic portion of the chain corresponds to 159–165; the sequence is ARLFPKQ. Residues 166–186 traverse the membrane as a helical segment; it reads FIWVTGILNVCWAIGTAIFYL. Residues 187–191 lie on the Extracellular side of the membrane; it reads WRKYW. The chain crosses the membrane as a helical span at residues 192 to 212; it reads SAGIVFLIFGLFMAFCFWTWI. Topologically, residues 213-239 are cytoplasmic; it reads SRIPFSALMLKTTIDVSKKYGHVYLVS. The chain crosses the membrane as a helical span at residues 240–260; that stretch reads LIGGIIATAFSAWYAITLVGI. The Extracellular segment spans residues 261–280; that stretch reads YVKYQPAQDNPSCADGGCGK. The chain crosses the membrane as a helical span at residues 281–301; that stretch reads GKVIGLIAFITFAMYWFSEWL. The Cytoplasmic portion of the chain corresponds to 302–335; that stretch reads KNTIHTTIAGVYGSWYFNPHNFPKDATRASAKRA. A helical membrane pass occupies residues 336-356; sequence LTYSFGSIALGSLLVAIIQFL. The Extracellular portion of the chain corresponds to 357 to 372; sequence RQICNAARNQEGADGS. A helical transmembrane segment spans residues 373–393; it reads FVGYAIFCCISCLLGLLEWAV. Over 394 to 434 the chain is Cytoplasmic; that stretch reads EFINRYAFCHIALYGKAYFAAAKDTWKMIKDRGIDALINDC. The helical transmembrane segment at 435–455 threads the bilayer; it reads LIGPVLSFGALFIAYACALLA. At 456-474 the chain is on the extracellular side; sequence YLYLYFTDPAYNSDGQYTA. Residues 475 to 495 traverse the membrane as a helical segment; it reads VVMAFSFLIGFQIANVFTTPI. The Cytoplasmic portion of the chain corresponds to 496-538; the sequence is SSGIETIFVAAGWDPQVMWRDHPELYNEMVRVYPKVQQVIKDR.

This sequence belongs to the CTL (choline transporter-like) family.

Its subcellular location is the cell membrane. Functionally, probably involved in transport through the plasma membrane. In Gibberella zeae (strain ATCC MYA-4620 / CBS 123657 / FGSC 9075 / NRRL 31084 / PH-1) (Wheat head blight fungus), this protein is Protein PNS1 (PNS1).